Reading from the N-terminus, the 731-residue chain is MTVDPASHITIPEADLARLRHCNHHDPHGFYGWHETEAGSVIRTRQVGATQVNLLIDDTSHVMTPIGDDIFAIDLGHRERADYRLEVTWPDQEPQVKADPYYFLPTVGEMDIYLFSEGRHERLWEILGANIKTYQTALGTVRGTAFTVWAPNAIGCAVVGGFNGWNASQHPMRSMGGSGLWELFIPGIEEGEVYKFAVQTREGQRRDKADPMARRAELAPATGSIVASSEYQWQDSEWLRERSQTDLASKPMSVYEVHLGSWRWGKNYEDLATELVDYVADLGYTHVEFLPVAEHPFGGSWGYQVTGYYAPTSRWGTPDQFRALVDAFHARGIGVIMDWVPAHFPKDDWALARFDGEALYEHPDWRRGEQKDWGTLVFDFGRNEVRNFLVANALYWIEEFHIDGLRVDAVASMLYLDYSREHGEWEPNIYGGRENLEAVQFLQEMNATVLRLHPGALTIAEESTSWPGVTAPTWDGGLGFSLKWNMGWMHDTLEYFSKNPVHRAFHHSELTFSLVYAFSERFVLPISHDEVVHGKGSLWDRMPGDTWNKAAGLRTFLAYMWSHPGKKLLFMGQEFGQREEWAEGQGLPWDIVDGWQGEYHEAIRTLTRSLNGVYSDSPALHTQDFTGEGFTWNKGDDATNNILAFTRFGSDGSQMLCVFNLSGTSQPEYQLGVAAGGEWKLVLNTDDAEFLGAENDIATSVQAAATPRDNFAYSLSLHVPAMSAQFYSLQK.

Asp408 acts as the Nucleophile in catalysis. The Proton donor role is filled by Glu461.

Belongs to the glycosyl hydrolase 13 family. GlgB subfamily. In terms of assembly, monomer.

It carries out the reaction Transfers a segment of a (1-&gt;4)-alpha-D-glucan chain to a primary hydroxy group in a similar glucan chain.. It functions in the pathway glycan biosynthesis; glycogen biosynthesis. Functionally, catalyzes the formation of the alpha-1,6-glucosidic linkages in glycogen by scission of a 1,4-alpha-linked oligosaccharide from growing alpha-1,4-glucan chains and the subsequent attachment of the oligosaccharide to the alpha-1,6 position. This chain is 1,4-alpha-glucan branching enzyme GlgB, found in Corynebacterium glutamicum (strain ATCC 13032 / DSM 20300 / JCM 1318 / BCRC 11384 / CCUG 27702 / LMG 3730 / NBRC 12168 / NCIMB 10025 / NRRL B-2784 / 534).